The following is a 546-amino-acid chain: Cysteine desulfurase SufS (546 aa).

Positions 1–22 (MLRGPRCLYIYLFFVFLPFSFC) are cleaved as a signal peptide. N6-(pyridoxal phosphate)lysine is present on Lys291. Cys497 serves as the catalytic Cysteine persulfide intermediate.

It belongs to the class-V pyridoxal-phosphate-dependent aminotransferase family. Csd subfamily. Monomer. Interacts with SufE; interaction enhances cysteine desulfurase activity of SufS. The cofactor is pyridoxal 5'-phosphate. In terms of processing, proteolytically cleaved.

Its subcellular location is the plastid. It is found in the apicoplast. The enzyme catalyses (sulfur carrier)-H + L-cysteine = (sulfur carrier)-SH + L-alanine. The protein operates within cofactor biosynthesis; iron-sulfur cluster biosynthesis. Catalyzes sulfur activation and mobilization in sulfur mobilization (SUF) pathway for iron-sulfur (Fe-S) cluster biogenesis. Active when in complex with a partner protein SufE. Required for apicoplast maintenance. Plays a role in the development of sporozoites in oocysts in mosquitoes. May provide sulfur for MNMA-mediated tRNA modifications. The chain is Cysteine desulfurase SufS from Plasmodium falciparum (isolate 3D7).